The chain runs to 673 residues: Pesticin receptor (673 aa).

The first 22 residues, 1-22, serve as a signal peptide directing secretion; it reads MKMTRLYPLALGGLLLPAIANA. Positions 30 to 37 match the TonB box motif; sequence STLEVTAS. The region spanning 41-155 is the TBDR plug domain; that stretch reads SRSASANNVS…QGGIINIVTQ (115 aa). One can recognise a TBDR beta-barrel domain in the interval 160-672; that stretch reads TPRGYIEGGV…TVGINTRIDF (513 aa). Residues 657–673 carry the TonB C-terminal box motif; sequence QVNMGRTVGINTRIDFF.

The protein belongs to the TonB-dependent receptor family.

The protein localises to the cell outer membrane. Receptor for the bacteriocin pesticin and for the siderophore yersiniabactin. The chain is Pesticin receptor (fyuA) from Yersinia enterocolitica.